The sequence spans 379 residues: CCN family member 1 (379 aa).

An N-terminal signal peptide occupies residues 1–24 (MSSSTIKTLAVAVTLLHLTRLALS). The 70-residue stretch at 25 to 94 (TCPAACHCPL…TALKGICRAQ (70 aa)) folds into the IGFBP N-terminal domain. 6 disulfide bridges follow: cysteine 26–cysteine 50, cysteine 30–cysteine 52, cysteine 32–cysteine 53, cysteine 39–cysteine 56, cysteine 64–cysteine 78, and cysteine 70–cysteine 91. A VWFC domain is found at 98-164 (RPCEYNSRIY…GQCCEEWVCD (67 aa)). The residue at position 184 (serine 184) is a Phosphoserine. One can recognise a TSP type-1 domain in the interval 226–271 (KCIVQTTSWSQCSKSCGTGISTRVTNDNSECRLVKETRICEVRPCG). The interval 277–313 (SLKKGKKCSKTKKSPEPVRFTYAGCSSVKKYRPKYCG) is heparin-binding. Disulfide bonds link cysteine 284–cysteine 321, cysteine 301–cysteine 335, cysteine 312–cysteine 351, cysteine 315–cysteine 353, and cysteine 320–cysteine 357. The 75-residue stretch at 284 to 358 (CSKTKKSPEP…QSCKCNYNCP (75 aa)) folds into the CTCK domain.

The protein belongs to the CCN family. In terms of assembly, interaction with integrins is heparin- and cell-type-dependent and promotes cell adhesion.

The protein resides in the secreted. In terms of biological role, promotes cell proliferation, chemotaxis, angiogenesis and cell adhesion. Appears to play a role in wound healing by up-regulating, in skin fibroblasts, the expression of a number of genes involved in angiogenesis, inflammation and matrix remodeling including VEGA-A, VEGA-C, MMP1, MMP3, TIMP1, uPA, PAI-1 and integrins alpha-3 and alpha-5. CCN1-mediated gene regulation is dependent on heparin-binding. Down-regulates the expression of alpha-1 and alpha-2 subunits of collagen type-1. Promotes cell adhesion and adhesive signaling through integrin alpha-6/beta-1, cell migration through integrin alpha-1/beta-5 and cell proliferation through integrin alpha-v/beta-3. The polypeptide is CCN family member 1 (Rattus norvegicus (Rat)).